Consider the following 334-residue polypeptide: Glycerol-3-phosphate dehydrogenase [NAD(P)+] (334 aa).

Residues Ser-14, Tyr-15, His-35, and Lys-109 each coordinate NADPH. Sn-glycerol 3-phosphate contacts are provided by Lys-109, Gly-138, and Thr-140. Residue Ala-142 participates in NADPH binding. 5 residues coordinate sn-glycerol 3-phosphate: Lys-194, Asp-247, Ser-257, Arg-258, and Asn-259. The active-site Proton acceptor is Lys-194. An NADPH-binding site is contributed by Arg-258. Positions 282 and 284 each coordinate NADPH.

It belongs to the NAD-dependent glycerol-3-phosphate dehydrogenase family.

The protein localises to the cytoplasm. It carries out the reaction sn-glycerol 3-phosphate + NAD(+) = dihydroxyacetone phosphate + NADH + H(+). It catalyses the reaction sn-glycerol 3-phosphate + NADP(+) = dihydroxyacetone phosphate + NADPH + H(+). Its pathway is membrane lipid metabolism; glycerophospholipid metabolism. Its function is as follows. Catalyzes the reduction of the glycolytic intermediate dihydroxyacetone phosphate (DHAP) to sn-glycerol 3-phosphate (G3P), the key precursor for phospholipid synthesis. In Psychromonas ingrahamii (strain DSM 17664 / CCUG 51855 / 37), this protein is Glycerol-3-phosphate dehydrogenase [NAD(P)+].